The sequence spans 504 residues: Glucose-6-phosphate isomerase (504 aa).

Glu333 (proton donor) is an active-site residue. Residues His364 and Lys473 contribute to the active site.

The protein belongs to the GPI family.

It is found in the cytoplasm. It catalyses the reaction alpha-D-glucose 6-phosphate = beta-D-fructose 6-phosphate. It participates in carbohydrate biosynthesis; gluconeogenesis. Its pathway is carbohydrate degradation; glycolysis; D-glyceraldehyde 3-phosphate and glycerone phosphate from D-glucose: step 2/4. Its function is as follows. Catalyzes the reversible isomerization of glucose-6-phosphate to fructose-6-phosphate. The protein is Glucose-6-phosphate isomerase of Stenotrophomonas maltophilia (strain R551-3).